The sequence spans 431 residues: Galanin-like G-protein coupled receptor npr-9 (431 aa).

Over 1 to 34 the chain is Extracellular; sequence MEFENLTKEEMEQLQKIYDDTISFERKIGIIIPT. N-linked (GlcNAc...) asparagine glycosylation occurs at Asn5. The helical transmembrane segment at 35–55 threads the bilayer; it reads IFAVIILVGLVGNALVVIVAF. The Cytoplasmic segment spans residues 56 to 66; the sequence is GRQMRNSTNTL. The helical transmembrane segment at 67–87 threads the bilayer; sequence IIGLAISDLMFLLLCVPFTAV. Residues 88–101 are Extracellular-facing; it reads DYAAPTWIFPEWTC. An intrachain disulfide couples Cys101 to Cys182. A helical membrane pass occupies residues 102 to 124; the sequence is SMINFFQHTSAYCSVWTLTLMAL. The Cytoplasmic segment spans residues 125–143; sequence DRYLAVVYPVESMTLRTPR. The helical transmembrane segment at 144–164 threads the bilayer; that stretch reads NTVIALCFIYIIIIASQIPVG. Topologically, residues 165–203 are extracellular; the sequence is RMHGIYVYDFIMEKRSTCAILTIATAEATPTMARTYFMT. A helical transmembrane segment spans residues 204–224; sequence FNVFGYVLPLGISVVLYGLML. At 225 to 268 the chain is on the cytoplasmic side; it reads RKLWDMPRPGNSQSVGGRNLTNRDSGSSIRRRPEATAAKRKVTR. Residues 235 to 252 are compositionally biased toward polar residues; sequence NSQSVGGRNLTNRDSGSS. The segment at 235–257 is disordered; it reads NSQSVGGRNLTNRDSGSSIRRRP. The helical transmembrane segment at 269 to 289 threads the bilayer; it reads LVLCVLITWALCWLPLNVCFF. Over 290 to 298 the chain is Extracellular; it reads MSGLAYPEP. Residues 299 to 319 traverse the membrane as a helical segment; that stretch reads LVISHGVIMVIVQIASQVLAY. The Cytoplasmic segment spans residues 320 to 431; the sequence is TNSCLNPILY…RSKSTRSYNL (112 aa). Over residues 393–414 the composition is skewed to polar residues; sequence SLLKDNSSSATSVQPLRTSIQA. Positions 393–431 are disordered; the sequence is SLLKDNSSSATSVQPLRTSIQAKKTKNIGRSKSTRSYNL. Positions 415-425 are enriched in basic residues; the sequence is KKTKNIGRSKS.

Belongs to the G-protein coupled receptor 1 family. As to expression, exclusively expressed in the AIB interneuron.

The protein resides in the cell membrane. Functionally, neuropeptide that controls movement such as roaming, foraging and backwards locomotion or 'reversals' in response to environmental cues such as food availability or volatile odorants such as octanol. Antagonizes AIB interneuron activity to control bacterial colonization and may negatively regulate the expression of immunity-related genes such as pqm-1 and dod-22 in response to infection by P.aeruginosa. The chain is Galanin-like G-protein coupled receptor npr-9 from Caenorhabditis elegans.